The sequence spans 40 residues: Photosystem II reaction center protein J (40 aa).

The chain crosses the membrane as a helical span at residues 8 to 28; the sequence is IPLWLIGTIAGILVIGLVGIF.

The protein belongs to the PsbJ family. PSII is composed of 1 copy each of membrane proteins PsbA, PsbB, PsbC, PsbD, PsbE, PsbF, PsbH, PsbI, PsbJ, PsbK, PsbL, PsbM, PsbT, PsbX, PsbY, PsbZ, Psb30/Ycf12, at least 3 peripheral proteins of the oxygen-evolving complex and a large number of cofactors. It forms dimeric complexes.

It is found in the plastid. It localises to the chloroplast thylakoid membrane. One of the components of the core complex of photosystem II (PSII). PSII is a light-driven water:plastoquinone oxidoreductase that uses light energy to abstract electrons from H(2)O, generating O(2) and a proton gradient subsequently used for ATP formation. It consists of a core antenna complex that captures photons, and an electron transfer chain that converts photonic excitation into a charge separation. The protein is Photosystem II reaction center protein J of Anthoceros angustus (Hornwort).